Consider the following 429-residue polypeptide: GTPase Obg (429 aa).

One can recognise an Obg domain in the interval 1-158 (MFVDQVKIYV…RNVQLELKVL (158 aa)). Residues 124 to 145 (RGNKRFATPANPAPELSENGEP) form a disordered region. The OBG-type G domain occupies 159-329 (ADVGLVGFPS…LLLAIADKLE (171 aa)). GTP is bound by residues 165-172 (GFPSVGKS), 190-194 (FTTIV), 212-215 (DLPG), 282-285 (NKMD), and 310-312 (SAV). Mg(2+)-binding residues include serine 172 and threonine 192. An OCT domain is found at 351-429 (KYVAEEPDFE…LLDYEFEFMD (79 aa)).

Belongs to the TRAFAC class OBG-HflX-like GTPase superfamily. OBG GTPase family. Monomer. Requires Mg(2+) as cofactor.

It is found in the cytoplasm. Its function is as follows. An essential GTPase which binds GTP, GDP and possibly (p)ppGpp with moderate affinity, with high nucleotide exchange rates and a fairly low GTP hydrolysis rate. Plays a role in control of the cell cycle, stress response, ribosome biogenesis and in those bacteria that undergo differentiation, in morphogenesis control. The polypeptide is GTPase Obg (Listeria innocua serovar 6a (strain ATCC BAA-680 / CLIP 11262)).